Reading from the N-terminus, the 156-residue chain is UPF0266 membrane protein YobD (156 aa).

The Periplasmic portion of the chain corresponds to 1–5 (MTITD). A helical membrane pass occupies residues 6-26 (LVLILFIAALLAYALYDQFIM). At 27-44 (PRRNGPTLLSIALLRRGR) the chain is on the cytoplasmic side. Residues 45 to 65 (VDSVIFVGLVAILIYNNVTSH) form a helical membrane-spanning segment. Residue Gly-66 is a topological domain, periplasmic. Residues 67 to 87 (AQMTTWLLSALALMGFYIFWI) form a helical membrane-spanning segment. At 88-156 (RTPRIIFKQR…LLIENQYLKI (69 aa)) the chain is on the cytoplasmic side.

The protein belongs to the UPF0266 family.

It is found in the cell inner membrane. The chain is UPF0266 membrane protein YobD (yobD) from Salmonella typhimurium (strain LT2 / SGSC1412 / ATCC 700720).